Consider the following 60-residue polypeptide: Large ribosomal subunit protein bL32 (60 aa).

Residues Met-1 to Arg-16 are compositionally biased toward basic residues. The interval Met-1–Ala-60 is disordered. A compositionally biased stretch (basic and acidic residues) spans Arg-17–Leu-44.

This sequence belongs to the bacterial ribosomal protein bL32 family.

The chain is Large ribosomal subunit protein bL32 from Rhodopseudomonas palustris (strain BisB5).